Reading from the N-terminus, the 431-residue chain is Na(+)/H(+) antiporter NhaA (431 aa).

Helical transmembrane passes span 33 to 53 (VGGA…NSPW), 74 to 94 (LSIS…VVGV), 112 to 132 (ALPI…FVGV), 144 to 164 (GWAI…AVIA), 173 to 193 (IFLL…IAVF), 197 to 217 (QLSF…GLAV), 225 to 245 (FLLL…GVHA), 279 to 299 (FAVP…LSGF), 311 to 331 (VIAG…YVLA), 347 to 367 (VLGL…IGEL), and 379 to 399 (AKIA…VVLL).

It belongs to the NhaA Na(+)/H(+) (TC 2.A.33) antiporter family.

The protein resides in the cell membrane. It carries out the reaction Na(+)(in) + 2 H(+)(out) = Na(+)(out) + 2 H(+)(in). Na(+)/H(+) antiporter that extrudes sodium in exchange for external protons. This is Na(+)/H(+) antiporter NhaA from Mycolicibacterium smegmatis (strain ATCC 700084 / mc(2)155) (Mycobacterium smegmatis).